Consider the following 265-residue polypeptide: Thiazole synthase (265 aa).

Residue Lys106 is the Schiff-base intermediate with DXP of the active site. 1-deoxy-D-xylulose 5-phosphate-binding positions include Gly167, 193–194, and 215–216; these read AG and NT. The tract at residues 245-265 is disordered; the sequence is GRIPRRARAEPSSPQLGLVGS.

This sequence belongs to the ThiG family. As to quaternary structure, homotetramer. Forms heterodimers with either ThiH or ThiS.

It is found in the cytoplasm. The catalysed reaction is [ThiS sulfur-carrier protein]-C-terminal-Gly-aminoethanethioate + 2-iminoacetate + 1-deoxy-D-xylulose 5-phosphate = [ThiS sulfur-carrier protein]-C-terminal Gly-Gly + 2-[(2R,5Z)-2-carboxy-4-methylthiazol-5(2H)-ylidene]ethyl phosphate + 2 H2O + H(+). It functions in the pathway cofactor biosynthesis; thiamine diphosphate biosynthesis. Functionally, catalyzes the rearrangement of 1-deoxy-D-xylulose 5-phosphate (DXP) to produce the thiazole phosphate moiety of thiamine. Sulfur is provided by the thiocarboxylate moiety of the carrier protein ThiS. In vitro, sulfur can be provided by H(2)S. This is Thiazole synthase from Methylobacterium sp. (strain 4-46).